Reading from the N-terminus, the 262-residue chain is tRNA pseudouridine synthase A (262 aa).

Residue Asp-52 is the Nucleophile of the active site. Tyr-103 is a binding site for substrate.

The protein belongs to the tRNA pseudouridine synthase TruA family.

It carries out the reaction uridine(38/39/40) in tRNA = pseudouridine(38/39/40) in tRNA. Functionally, formation of pseudouridine at positions 38, 39 and 40 in the anticodon stem and loop of transfer RNAs. The protein is tRNA pseudouridine synthase A of Methanococcus maripaludis (strain C6 / ATCC BAA-1332).